A 241-amino-acid chain; its full sequence is MTDWLYRYPPLYTGILLKRYKRFFADVQLTSGEVVTAHCPNTGPMTGVSTLGSAVQLSKSANPKRKLAYTLELIQVHDNEPTWVGVNTALPNQIVKLALAKYLFPELGNYSYIKSEVVYGVDKKSRVDFFLTGSDTERPIYLEVKNTTWTKGTLALFPDTETTRGQKHLRELTALLPQMRSVMLYFINRGDCTEFAPGDSTDPIYGKLLREAIALGLEVLPCRFDVTPEGIRYLGLAKLVI.

This sequence belongs to the SfsA family.

This chain is Sugar fermentation stimulation protein homolog, found in Nostoc sp. (strain PCC 7120 / SAG 25.82 / UTEX 2576).